A 271-amino-acid chain; its full sequence is Aspartate/glutamate leucyltransferase (271 aa).

Belongs to the R-transferase family. Bpt subfamily.

The protein resides in the cytoplasm. It carries out the reaction N-terminal L-glutamyl-[protein] + L-leucyl-tRNA(Leu) = N-terminal L-leucyl-L-glutamyl-[protein] + tRNA(Leu) + H(+). The catalysed reaction is N-terminal L-aspartyl-[protein] + L-leucyl-tRNA(Leu) = N-terminal L-leucyl-L-aspartyl-[protein] + tRNA(Leu) + H(+). In terms of biological role, functions in the N-end rule pathway of protein degradation where it conjugates Leu from its aminoacyl-tRNA to the N-termini of proteins containing an N-terminal aspartate or glutamate. In Acinetobacter baumannii (strain SDF), this protein is Aspartate/glutamate leucyltransferase.